A 316-amino-acid chain; its full sequence is L-lactate dehydrogenase (316 aa).

NAD(+) contacts are provided by residues 13–15 (GMI), 34–36 (FDI), tyrosine 67, and 79–83 (TAGFT). Arginine 95 is a binding site for substrate. NAD(+)-binding positions include 125-127 (VTN), leucine 150, and leucine 154. Residues arginine 158 and histidine 182 each coordinate substrate. An NAD(+)-binding site is contributed by histidine 182. Residue histidine 182 is the Proton acceptor of the active site.

It belongs to the LDH/MDH superfamily. LDH family. In terms of assembly, homotetramer.

The enzyme catalyses (S)-lactate + NAD(+) = pyruvate + NADH + H(+). Its pathway is fermentation; pyruvate fermentation to lactate; (S)-lactate from pyruvate: step 1/1. In Plasmodium berghei, this protein is L-lactate dehydrogenase.